The chain runs to 1422 residues: Cardiac-enriched FHL2-interacting protein (1422 aa).

Residues 1–23 (MQGNKKCADGFSDTSSIGSVLDE) form a disordered region. Position 119 is a phosphothreonine (Thr119). Disordered regions lie at residues 151–177 (RTEA…KFAH), 199–265 (AGVS…GRGK), 279–443 (SAFE…SSPF), 459–500 (LETS…KAPS), 516–718 (YSPL…SDSQ), 731–850 (FSTS…TNKH), 877–1127 (VSSE…HLER), 1142–1244 (TGAA…GWEP), and 1353–1422 (RQGS…EGVS). Positions 201 to 210 (VSSTHQSSHQ) are enriched in polar residues. Composition is skewed to basic and acidic residues over residues 284–298 (WDAH…KDIT) and 305–315 (KAPKHYEDMPL). At Ser327 the chain carries Phosphoserine. The segment covering 342 to 351 (SPSGIQSTSG) has biased composition (polar residues). The span at 395–405 (GPHDASEDKKQ) shows a compositional bias: basic and acidic residues. Positions 461 to 470 (TSDTQPVETS) are enriched in polar residues. Phosphoserine is present on Ser472. Basic and acidic residues-rich tracts occupy residues 481–495 (QEKE…DSYK), 524–537 (GFDE…DGKQ), and 579–588 (PAMDSRESFA). The segment covering 590–606 (SHPTFSSPSASSKTHFS) has biased composition (low complexity). Composition is skewed to basic and acidic residues over residues 611 to 622 (AAERNSHEKEEA), 635 to 644 (WHPDSRENLP), and 653 to 675 (CNRD…EKRL). The span at 731-744 (FSTSSSDQSFASFE) shows a compositional bias: low complexity. Positions 790 to 801 (GVEEHRQKETQR) are enriched in basic and acidic residues. Ser815 is modified (phosphoserine). Residues 828-839 (ADKDTALSHAKD) are compositionally biased toward basic and acidic residues. Composition is skewed to polar residues over residues 907–926 (SESQ…STEQ) and 944–954 (QDETSQQTRKG). Over residues 975-991 (ADERLAHEKSRSADSGK) the composition is skewed to basic and acidic residues. The span at 1048-1067 (AATSPNPSSLGGSSTCSPAA) shows a compositional bias: polar residues. Pro residues predominate over residues 1087-1099 (PPGPGPWASPGPS). Over residues 1173–1184 (RRAKKLASKRRK) the composition is skewed to basic residues. The segment covering 1185–1202 (SDQMSEKHTEAWEGKSFT) has biased composition (basic and acidic residues). Polar residues predominate over residues 1353–1366 (RQGSSHRPQSSQGA). The span at 1411–1422 (DDLEDFATEGVS) shows a compositional bias: acidic residues.

Interacts with FHL2.

The protein localises to the cytoplasm. The protein resides in the myofibril. It is found in the sarcomere. It localises to the z line. Functionally, plays an important role in cardiomyocyte hypertrophy via activation of the calcineurin/NFAT signaling pathway. This Rattus norvegicus (Rat) protein is Cardiac-enriched FHL2-interacting protein.